A 134-amino-acid chain; its full sequence is Profilin-2 (134 aa).

Cys13 and Cys118 are disulfide-bonded. Residues 84-100 (AVIRGKKGSGGITIKKT) carry the Involved in PIP2 interaction motif. Position 114 is a phosphothreonine (Thr114).

The protein belongs to the profilin family. In terms of assembly, occurs in many kinds of cells as a complex with monomeric actin in a 1:1 ratio. In terms of processing, phosphorylated by MAP kinases.

The protein resides in the cytoplasm. The protein localises to the cytoskeleton. In terms of biological role, binds to actin and affects the structure of the cytoskeleton. At high concentrations, profilin prevents the polymerization of actin, whereas it enhances it at low concentrations. This is Profilin-2 from Olea europaea (Common olive).